Here is a 982-residue protein sequence, read N- to C-terminus: Little elongation complex subunit 2 (982 aa).

Phosphoserine is present on residues serine 17 and serine 326. Residues 410-427 show a composition bias toward polar residues; sequence TTKVSKSPSPASTSTVPN. Disordered regions lie at residues 410–450 and 473–504; these read TTKV…PDIS and GMDGGPEECKNKDDQGFESCEKVSNSDKPLIQ. Over residues 479-497 the composition is skewed to basic and acidic residues; sequence EECKNKDDQGFESCEKVSN. Serine 571 is modified (phosphoserine). At threonine 573 the chain carries Phosphothreonine. 3 disordered regions span residues 595-623, 672-697, and 930-982; these read VGSNLSSRPASPNSSSGQASVGNQTNTAC, ENSKQPSVSEQLSGPSDSSSWPKSGW, and PKSL…RKIT. The segment covering 597–610 has biased composition (low complexity); sequence SNLSSRPASPNSSS. Polar residues-rich tracts occupy residues 611–623 and 672–683; these read GQASVGNQTNTAC and ENSKQPSVSEQL. Positions 684-697 are enriched in low complexity; the sequence is SGPSDSSSWPKSGW. The span at 956 to 970 shows a compositional bias: polar residues; that stretch reads SMETKSSCLPAQQVE.

Belongs to the ICE2 family. As to quaternary structure, component of the little elongation complex (LEC), at least composed of ELL (ELL, ELL2 or ELL3), ZC3H8, ICE1 and ICE2. Interacts with ICE1 (via C-terminus domain). Interacts with ELL. In terms of tissue distribution, expressed at low levels in lung and testis.

Its subcellular location is the nucleus. Functionally, component of the little elongation complex (LEC), a complex required to regulate small nuclear RNA (snRNA) gene transcription by RNA polymerase II and III. In Homo sapiens (Human), this protein is Little elongation complex subunit 2 (ICE2).